Consider the following 141-residue polypeptide: Putative antiporter subunit mnhB2 (141 aa).

The next 4 helical transmembrane spans lie at 10 to 30 (TVTK…FFAG), 35 to 55 (GGGF…FLAF), 70 to 90 (ILMI…MFFG), and 114 to 134 (ITLF…TVML).

The protein belongs to the CPA3 antiporters (TC 2.A.63) subunit B family. As to quaternary structure, may form a heterooligomeric complex that consists of seven subunits: mnhA2, mnhB2, mnhC2, mnhD2, mnhE2, mnhF2 and mnhG2.

Its subcellular location is the cell membrane. The sequence is that of Putative antiporter subunit mnhB2 (mnhB2) from Staphylococcus aureus (strain Mu3 / ATCC 700698).